We begin with the raw amino-acid sequence, 510 residues long: Cobyric acid synthase (510 aa).

In terms of domain architecture, GATase cobBQ-type spans 262 to 460; the sequence is EIKVGIIKLP…IHGIFENDEW (199 aa). Cys343 serves as the catalytic Nucleophile. The active site involves His452.

Belongs to the CobB/CobQ family. CobQ subfamily.

It participates in cofactor biosynthesis; adenosylcobalamin biosynthesis. Its function is as follows. Catalyzes amidations at positions B, D, E, and G on adenosylcobyrinic A,C-diamide. NH(2) groups are provided by glutamine, and one molecule of ATP is hydrogenolyzed for each amidation. This chain is Cobyric acid synthase, found in Prochlorococcus marinus (strain MIT 9515).